An 81-amino-acid polypeptide reads, in one-letter code: MEKLTILLLVAAVLLSIQALNQEKHQRAKINLLSKRKPPAERWWRWGGCMAWFGLCSKDSECCSNSCDVTRCELMPFPPDW.

The N-terminal stretch at 1 to 19 is a signal peptide; the sequence is MEKLTILLLVAAVLLSIQA. Positions 20 to 45 are excised as a propeptide; that stretch reads LNQEKHQRAKINLLSKRKPPAERWWR. Disulfide bonds link cysteine 49–cysteine 63, cysteine 56–cysteine 67, and cysteine 62–cysteine 72.

Belongs to the conotoxin O2 superfamily. Expressed by the venom duct.

It localises to the secreted. Gamma-conotoxins may act on voltage-gated non-specific cation pacemaker channels (HCN). The protein is Gamma-conotoxin-like TxMEKL-0511 of Conus textile (Cloth-of-gold cone).